Consider the following 509-residue polypeptide: UDP-N-acetylmuramoyl-L-alanyl-D-glutamate--2,6-diaminopimelate ligase (509 aa).

Ser32 is a binding site for UDP-N-acetyl-alpha-D-muramoyl-L-alanyl-D-glutamate. 117–123 provides a ligand contact to ATP; that stretch reads GTNGKTT. Residues 159–160, Ser186, Gln192, and Arg194 each bind UDP-N-acetyl-alpha-D-muramoyl-L-alanyl-D-glutamate; that span reads TT. Lys226 carries the N6-carboxylysine modification. Meso-2,6-diaminopimelate-binding positions include Arg401, 425-428, Gly476, and Glu480; that span reads DNPR. Positions 425 to 428 match the Meso-diaminopimelate recognition motif motif; sequence DNPR.

The protein belongs to the MurCDEF family. MurE subfamily. It depends on Mg(2+) as a cofactor. In terms of processing, carboxylation is probably crucial for Mg(2+) binding and, consequently, for the gamma-phosphate positioning of ATP.

It localises to the cytoplasm. It catalyses the reaction UDP-N-acetyl-alpha-D-muramoyl-L-alanyl-D-glutamate + meso-2,6-diaminopimelate + ATP = UDP-N-acetyl-alpha-D-muramoyl-L-alanyl-gamma-D-glutamyl-meso-2,6-diaminopimelate + ADP + phosphate + H(+). Its pathway is cell wall biogenesis; peptidoglycan biosynthesis. Functionally, catalyzes the addition of meso-diaminopimelic acid to the nucleotide precursor UDP-N-acetylmuramoyl-L-alanyl-D-glutamate (UMAG) in the biosynthesis of bacterial cell-wall peptidoglycan. The polypeptide is UDP-N-acetylmuramoyl-L-alanyl-D-glutamate--2,6-diaminopimelate ligase (Prochlorococcus marinus (strain NATL1A)).